The sequence spans 299 residues: MDKQWAEVCCQVPAGLVDLLADFLVELSGNGVSIDNRALDTFTLDGIEELDTATVRAYFDPATDMAGQIAQIERFLGDNAAAFGGAPIPAPTVTLIRDEDWATGWRQHFVPTRIGRHLVIKPTWEPFAPEPGDQVIELDPGMAFGTGTHPTTRLCLEALETLGRPDRVLDVGTGSGILAIAAVRLGARQVIGTDIDPDAVIVAGENCALNGVEVELVTTPLALIPGRFDVVLANILAEDLVRMAGDLAAKVAAGGHLILSGILTEREAFVVEGFGRSGLALVAVSREGEWSCLVYRNEG.

Residues threonine 152, glycine 172, aspartate 194, and asparagine 234 each contribute to the S-adenosyl-L-methionine site.

Belongs to the methyltransferase superfamily. PrmA family.

The protein resides in the cytoplasm. It carries out the reaction L-lysyl-[protein] + 3 S-adenosyl-L-methionine = N(6),N(6),N(6)-trimethyl-L-lysyl-[protein] + 3 S-adenosyl-L-homocysteine + 3 H(+). Functionally, methylates ribosomal protein L11. The sequence is that of Ribosomal protein L11 methyltransferase from Geobacter sulfurreducens (strain ATCC 51573 / DSM 12127 / PCA).